The following is a 293-amino-acid chain: Urease accessory protein UreD 2 (293 aa).

Belongs to the UreD family. As to quaternary structure, ureD, UreF and UreG form a complex that acts as a GTP-hydrolysis-dependent molecular chaperone, activating the urease apoprotein by helping to assemble the nickel containing metallocenter of UreC. The UreE protein probably delivers the nickel.

The protein localises to the cytoplasm. Functionally, required for maturation of urease via the functional incorporation of the urease nickel metallocenter. The chain is Urease accessory protein UreD 2 from Streptomyces griseus subsp. griseus (strain JCM 4626 / CBS 651.72 / NBRC 13350 / KCC S-0626 / ISP 5235).